We begin with the raw amino-acid sequence, 420 residues long: Anaerobic glycerol-3-phosphate dehydrogenase subunit B (420 aa).

Belongs to the anaerobic G-3-P dehydrogenase subunit B family. In terms of assembly, composed of a catalytic GlpA/B dimer and of membrane bound GlpC. Requires FMN as cofactor.

It catalyses the reaction a quinone + sn-glycerol 3-phosphate = dihydroxyacetone phosphate + a quinol. It functions in the pathway polyol metabolism; glycerol degradation via glycerol kinase pathway; glycerone phosphate from sn-glycerol 3-phosphate (anaerobic route): step 1/1. Its function is as follows. Conversion of glycerol 3-phosphate to dihydroxyacetone. Uses fumarate or nitrate as electron acceptor. The sequence is that of Anaerobic glycerol-3-phosphate dehydrogenase subunit B from Pectobacterium atrosepticum (strain SCRI 1043 / ATCC BAA-672) (Erwinia carotovora subsp. atroseptica).